We begin with the raw amino-acid sequence, 223 residues long: Peptidyl-tRNA hydrolase (223 aa).

Position 16 (tyrosine 16) interacts with tRNA. Residue histidine 21 is the Proton acceptor of the active site. TRNA is bound by residues phenylalanine 67, asparagine 69, and asparagine 113.

This sequence belongs to the PTH family. In terms of assembly, monomer.

It localises to the cytoplasm. The catalysed reaction is an N-acyl-L-alpha-aminoacyl-tRNA + H2O = an N-acyl-L-amino acid + a tRNA + H(+). In terms of biological role, hydrolyzes ribosome-free peptidyl-tRNAs (with 1 or more amino acids incorporated), which drop off the ribosome during protein synthesis, or as a result of ribosome stalling. Functionally, catalyzes the release of premature peptidyl moieties from peptidyl-tRNA molecules trapped in stalled 50S ribosomal subunits, and thus maintains levels of free tRNAs and 50S ribosomes. The sequence is that of Peptidyl-tRNA hydrolase from Helicobacter hepaticus (strain ATCC 51449 / 3B1).